The primary structure comprises 221 residues: Histidine biosynthesis bifunctional protein HisIE (221 aa).

The interval 1 to 129 (MAYSKNFSIE…AKKTSPFSNI (129 aa)) is phosphoribosyl-AMP cyclohydrolase. Residues 130 to 221 (CSELFDTLHE…VLESRRGKNN (92 aa)) are phosphoribosyl-ATP pyrophosphohydrolase.

This sequence in the N-terminal section; belongs to the PRA-CH family. In the C-terminal section; belongs to the PRA-PH family.

The protein resides in the cytoplasm. It catalyses the reaction 1-(5-phospho-beta-D-ribosyl)-ATP + H2O = 1-(5-phospho-beta-D-ribosyl)-5'-AMP + diphosphate + H(+). The enzyme catalyses 1-(5-phospho-beta-D-ribosyl)-5'-AMP + H2O = 1-(5-phospho-beta-D-ribosyl)-5-[(5-phospho-beta-D-ribosylamino)methylideneamino]imidazole-4-carboxamide. The protein operates within amino-acid biosynthesis; L-histidine biosynthesis; L-histidine from 5-phospho-alpha-D-ribose 1-diphosphate: step 2/9. It functions in the pathway amino-acid biosynthesis; L-histidine biosynthesis; L-histidine from 5-phospho-alpha-D-ribose 1-diphosphate: step 3/9. The polypeptide is Histidine biosynthesis bifunctional protein HisIE (Prochlorococcus marinus subsp. pastoris (strain CCMP1986 / NIES-2087 / MED4)).